We begin with the raw amino-acid sequence, 90 residues long: MAEKFNLQDRFLNHLRVNKIEVKVYLVNGFQTKGFIRSFDSYTVLLESGNQQSLIYKHAISTIIPSSYVMLMPRKQEPEKEDETPEDQGS.

Positions 9 to 69 (DRFLNHLRVN…ISTIIPSSYV (61 aa)) constitute a Sm domain.

It belongs to the Hfq family. Homohexamer.

RNA chaperone that binds small regulatory RNA (sRNAs) and mRNAs to facilitate mRNA translational regulation in response to envelope stress, environmental stress and changes in metabolite concentrations. Also binds with high specificity to tRNAs. The polypeptide is RNA-binding protein Hfq (Thermotoga sp. (strain RQ2)).